The following is a 751-amino-acid chain: Adhesive plaque matrix protein (751 aa).

The N-terminal stretch at 1–20 (MEGIKLNLCLLCIFTCDILG) is a signal peptide. A nonrepetitive linker region spans residues 21-41 (FSNGNIYNAHGSAYAGASAGA). 55 tandem repeats follow at residues 109–118 (YKPKMTYPPT), 119–128 (YKPKPSYPPT), 129–138 (YKPKPSYPAT), 139–148 (YKSKSSYPSS), 149–158 (YKPKKTYPPT), 159–168 (YKPKLTYPPT), 169–178 (YKPKPSYPPT), 179–188 (YKPKPSYPAT), 189–198 (YKSKSSYPPS), 199–208 (YKTKKTYPSS), 209–218 (YKPKKTYPST), 219–228 (YKPKVSYPPT), 229–238 (YKSKKSYPPI), 239–248 (YKTKASYPSS), 249–258 (YKPKKTYPST), 259–268 (YKPKISYPPT), 269–278 (YKAKPSYPTS), 279–288 (YRAKPSYPST), 289–298 (YKAKPSYPPT), 299–308 (YKAKPSYPPT), 309–318 (YKAKPTYPST), 319–328 (YKAKPSYPPT), 329–338 (YKAKPSYPPT), 339–348 (YKAKPSYPPS), 349–358 (YKPKTTYPPS), 359–368 (YKPKISYPPT), 369–378 (YKAKPSYPPI), 379–388 (YKAKPSYPPT), 389–398 (YKAKPSYLPT), 399–408 (YKAKPSYPPT), 409–418 (YKAKPRYPTT), 419–428 (YKAKPSYPPT), 429–438 (YKAKPSYPPT), 439–448 (YKAKLSYPPT), 449–458 (YKAKPSYPPT), 459–468 (YKAKPSYPPT), 469–478 (YKAKPSYPPT), 479–488 (YKTKPSYPRT), 489–498 (YKAKPSYSST), 499–508 (YKAKPSYPPT), 509–518 (YKAKPSYPPT), 519–528 (YKAKPSYPPT), 529–538 (YKAKPSYPPT), 539–548 (YKAKPSYPPT), 549–558 (YKAKPSYPQT), 559–568 (YKAKSSYPPT), 569–578 (YKAKPSYPPT), 579–588 (YKAKPSYPPT), 589–598 (YKAKPSYPPT), 599–608 (YKAKPSYPPT), 609–618 (YKAKPSYPPT), 619–628 (YKAKPSYPPT), 629–638 (YKAKPSYPPT), 639–648 (YKAKPSYPPT), and 649–658 (YKAKPSYPAT). Residues 109–732 (YKPKMTYPPT…YKPKPSYPPT (624 aa)) form a 63 X 10 AA tandem repeats of Y-[KR]-[APTS]-K-[KPMSLTIVA]-[STR]-Y-[PLS]-[PASRQT]-[STI] region. The segment covering 158-167 (TYKPKLTYPP) has biased composition (low complexity). The segment at 158–359 (TYKPKLTYPP…KPKTTYPPSY (202 aa)) is disordered. Pro residues predominate over residues 168 to 184 (TYKPKPSYPPTYKPKPS). The segment covering 185-262 (YPATYKSKSS…KTYPSTYKPK (78 aa)) has biased composition (low complexity). 2 stretches are compositionally biased toward low complexity: residues 288 to 343 (TYKA…KAKP) and 350 to 359 (KPKTTYPPSY). A disordered region spans residues 397 to 636 (PTYKAKPSYP…PTYKAKPSYP (240 aa)). Over residues 444 to 486 (SYPPTYKAKPSYPPTYKAKPSYPPTYKAKPSYPPTYKTKPSYP) the composition is skewed to low complexity. The stretch at 659–662 (YPST) is one 56; truncated repeat. The interval 660–751 (PSTYKAKPSY…KKKISYPSQY (92 aa)) is disordered. The span at 662–677 (TYKAKPSYPPTYKAKP) shows a compositional bias: low complexity. 7 tandem repeats follow at residues 663-672 (YKAKPSYPPT), 673-682 (YKAKPSYPPT), 683-692 (YKPKPSYPPT), 693-702 (YKSKSSYPSS), 703-712 (YKPKKTYPPT), 713-722 (YKPKLTYPPI), and 723-732 (YKPKPSYPPT). Positions 678 to 690 (SYPPTYKPKPSYP) are enriched in pro residues. Positions 691–721 (PTYKSKSSYPSSYKPKKTYPPTYKPKLTYPP) are enriched in low complexity.

In terms of processing, hydroxylated on proline (mono- or dihydroxylation) and tyrosine residues (to L-DOPA = 3',4'-dihydroxyphenylalanine) of the tandem repeats. Produced by the byssal gland.

It localises to the secreted. In terms of biological role, provides adhesiveness to the mussel's foot. Mussels produce one of the strongest water insoluble glues. The mussel's adhesive is a bundle of threads, called a byssus, formed by a fibrous collagenous core coated with adhesive proteins. The chain is Adhesive plaque matrix protein (FP1) from Mytilus galloprovincialis (Mediterranean mussel).